We begin with the raw amino-acid sequence, 171 residues long: Protein TIFY 11d (171 aa).

In terms of domain architecture, Tify spans 65-100 (PSAGTAPLTIFYDGRMVVVDDVPAEKAAELMRLAGS). A Jas motif is present at residues 117 to 142 (PIARKASLQRFLQKRKHRITTTSEPY). Positions 119–126 (ARKASLQR) match the Nuclear localization signal motif.

The protein belongs to the TIFY/JAZ family. As to quaternary structure, interacts with BHLH148 and COI1A. Interacts with COI1A, COI1B and COI2 in a coronatine-dependent manner. Coronatine is an analog of jasmonoyl isoleucine (JA-Ile). Ubiquitinated. Increase in jasmonoyl isoleucine (JA-Ile) levels mediates its degradation via COI1A-mediated proteasome pathway.

The protein localises to the nucleus. Functionally, repressor of jasmonate (JA) responses. May act on an initial response of JA-regulated gene expression toward drought tolerance as part of a BHLH148-TIFY11D/JAZ12-COI1A complex. In Oryza sativa subsp. indica (Rice), this protein is Protein TIFY 11d.